Consider the following 371-residue polypeptide: MKEELTILRKFEHIEHCLKRNVEAHVSNGFEDVYFVHKSLPEIDKDEIDLTVEFLGRKFDYPIMITGMTGGTRREEIAGKINRTLAMAAEELNIPFGVGSQRAMIEKPETWESYYVRDVAPDIFLIGNLGAPQFGKNAKKRYSVKEVLYAIEKIEADAIAIHMNPLQESVQPEGDTTYAGVLEALAEIKSSINYPVIAKETGAGVSKEVAIELESVGIDAIDISGLGGTSWSAVEYYRAKDSEKRKIALKFWDWGIKTAISLAEVRWATNLPIIASGGMRDGVMMAKALAMGASLVGIALPVLRPAARGDVEGVVRIIRGYAEEIKNVMFLVGARNIRELRRVPLVITGFVREWLLQRIDLNSYLRSRFKH.

Substrate is bound at residue 9 to 10 (RK). FMN contacts are provided by residues threonine 66, 67–69 (GMT), serine 100, and asparagine 128. Position 100–102 (100–102 (SQR)) interacts with substrate. Glutamine 167 is a binding site for substrate. Residue glutamate 168 participates in Mg(2+) binding. FMN is bound by residues lysine 199, serine 224, threonine 229, 278–280 (GMR), and 299–300 (AL).

This sequence belongs to the IPP isomerase type 2 family. Homooctamer. Dimer of tetramers. FMN is required as a cofactor. It depends on NADPH as a cofactor. The cofactor is Mg(2+).

The protein localises to the cytoplasm. It catalyses the reaction isopentenyl diphosphate = dimethylallyl diphosphate. Functionally, involved in the biosynthesis of isoprenoids. Catalyzes the 1,3-allylic rearrangement of the homoallylic substrate isopentenyl (IPP) to its allylic isomer, dimethylallyl diphosphate (DMAPP). This is Isopentenyl-diphosphate delta-isomerase from Pyrococcus horikoshii (strain ATCC 700860 / DSM 12428 / JCM 9974 / NBRC 100139 / OT-3).